The chain runs to 167 residues: SsrA-binding protein (167 aa).

A disordered region spans residues 144 to 167 (HDKRAADKEKQSKKEVRSAMAKYQ). Over residues 146 to 160 (KRAADKEKQSKKEVR) the composition is skewed to basic and acidic residues.

The protein belongs to the SmpB family.

The protein resides in the cytoplasm. Required for rescue of stalled ribosomes mediated by trans-translation. Binds to transfer-messenger RNA (tmRNA), required for stable association of tmRNA with ribosomes. tmRNA and SmpB together mimic tRNA shape, replacing the anticodon stem-loop with SmpB. tmRNA is encoded by the ssrA gene; the 2 termini fold to resemble tRNA(Ala) and it encodes a 'tag peptide', a short internal open reading frame. During trans-translation Ala-aminoacylated tmRNA acts like a tRNA, entering the A-site of stalled ribosomes, displacing the stalled mRNA. The ribosome then switches to translate the ORF on the tmRNA; the nascent peptide is terminated with the 'tag peptide' encoded by the tmRNA and targeted for degradation. The ribosome is freed to recommence translation, which seems to be the essential function of trans-translation. This is SsrA-binding protein from Synechococcus sp. (strain CC9902).